The following is a 207-amino-acid chain: SPRY domain-containing protein 4 (207 aa).

The 196-residue stretch at 12-207 (YRWGTKRWGV…HSGLEVPKGL (196 aa)) folds into the B30.2/SPRY domain. 2 positions are modified to N6-acetyllysine: lysine 53 and lysine 130. An N6-succinyllysine modification is found at lysine 139.

The polypeptide is SPRY domain-containing protein 4 (Spryd4) (Mus musculus (Mouse)).